The chain runs to 613 residues: Isocitrate dehydrogenase kinase/phosphatase (613 aa).

ATP-binding positions include 328–334 (APGIRGL) and Lys-349. The active site involves Asp-384.

The protein belongs to the AceK family.

The protein localises to the cytoplasm. The catalysed reaction is L-seryl-[isocitrate dehydrogenase] + ATP = O-phospho-L-seryl-[isocitrate dehydrogenase] + ADP + H(+). Its function is as follows. Bifunctional enzyme which can phosphorylate or dephosphorylate isocitrate dehydrogenase (IDH) on a specific serine residue. This is a regulatory mechanism which enables bacteria to bypass the Krebs cycle via the glyoxylate shunt in response to the source of carbon. When bacteria are grown on glucose, IDH is fully active and unphosphorylated, but when grown on acetate or ethanol, the activity of IDH declines drastically concomitant with its phosphorylation. The chain is Isocitrate dehydrogenase kinase/phosphatase from Cupriavidus necator (strain ATCC 17699 / DSM 428 / KCTC 22496 / NCIMB 10442 / H16 / Stanier 337) (Ralstonia eutropha).